Here is a 189-residue protein sequence, read N- to C-terminus: Inosine triphosphate pyrophosphatase (189 aa).

8-13 (TGNANK) lines the ITP pocket. Glu-39 lines the Mg(2+) pocket. ITP-binding positions include Lys-51, 67–68 (DT), Lys-84, 143–146 (FGWD), Lys-167, and 172–173 (HR).

Belongs to the HAM1 NTPase family. As to quaternary structure, homodimer. Mg(2+) is required as a cofactor. Mn(2+) serves as cofactor.

The protein resides in the cytoplasm. The protein localises to the nucleus. The enzyme catalyses ITP + H2O = IMP + diphosphate + H(+). The catalysed reaction is dITP + H2O = dIMP + diphosphate + H(+). It carries out the reaction XTP + H2O = XMP + diphosphate + H(+). Pyrophosphatase that hydrolyzes non-canonical purine nucleotides such as inosine triphosphate (ITP), deoxyinosine triphosphate (dITP) or xanthosine 5'-triphosphate (XTP) to their respective monophosphate derivatives. The enzyme does not distinguish between the deoxy- and ribose forms. Probably excludes non-canonical purines from RNA and DNA precursor pools, thus preventing their incorporation into RNA and DNA and avoiding chromosomal lesions. This Cryptococcus neoformans var. neoformans serotype D (strain JEC21 / ATCC MYA-565) (Filobasidiella neoformans) protein is Inosine triphosphate pyrophosphatase.